The following is a 60-amino-acid chain: Large ribosomal subunit protein bL32 (60 aa).

It belongs to the bacterial ribosomal protein bL32 family.

The polypeptide is Large ribosomal subunit protein bL32 (Oenococcus oeni (strain ATCC BAA-331 / PSU-1)).